A 454-amino-acid polypeptide reads, in one-letter code: tRNA modification GTPase MnmE (454 aa).

(6S)-5-formyl-5,6,7,8-tetrahydrofolate is bound by residues arginine 23, glutamate 80, and lysine 120. The TrmE-type G domain maps to 216–377 (GMKVVIAGKP…LRTHLKQSMG (162 aa)). Asparagine 226 provides a ligand contact to K(+). GTP is bound by residues 226-231 (NAGKSS), 245-251 (TAIAGTT), 270-273 (DTAG), and 335-338 (NKAD). Residue serine 230 coordinates Mg(2+). K(+) contacts are provided by threonine 245, isoleucine 247, and threonine 250. Position 251 (threonine 251) interacts with Mg(2+). Lysine 454 serves as a coordination point for (6S)-5-formyl-5,6,7,8-tetrahydrofolate.

This sequence belongs to the TRAFAC class TrmE-Era-EngA-EngB-Septin-like GTPase superfamily. TrmE GTPase family. Homodimer. Heterotetramer of two MnmE and two MnmG subunits. Requires K(+) as cofactor.

It localises to the cytoplasm. Its function is as follows. Exhibits a very high intrinsic GTPase hydrolysis rate. Involved in the addition of a carboxymethylaminomethyl (cmnm) group at the wobble position (U34) of certain tRNAs, forming tRNA-cmnm(5)s(2)U34. In Sodalis glossinidius (strain morsitans), this protein is tRNA modification GTPase MnmE.